A 132-amino-acid chain; its full sequence is Small ribosomal subunit protein uS8 (132 aa).

This sequence belongs to the universal ribosomal protein uS8 family. Part of the 30S ribosomal subunit. Contacts proteins S5 and S12.

Its function is as follows. One of the primary rRNA binding proteins, it binds directly to 16S rRNA central domain where it helps coordinate assembly of the platform of the 30S subunit. The protein is Small ribosomal subunit protein uS8 of Desulfitobacterium hafniense (strain DSM 10664 / DCB-2).